The following is an 855-amino-acid chain: Discoidin domain-containing receptor 2 (855 aa).

Residues 1 to 21 (MILIPRMLLVLFLLLPILSSA) form the signal peptide. The Extracellular segment spans residues 22–399 (KAQVNPAICR…MLKVDDSNTR (378 aa)). The region spanning 30 to 185 (CRYPLGMSGG…VCMRVELYGC (156 aa)) is the F5/8 type C domain. Disulfide bonds link cysteine 30/cysteine 185 and cysteine 73/cysteine 177. Residues asparagine 121, asparagine 213, asparagine 261, asparagine 280, and asparagine 372 are each glycosylated (N-linked (GlcNAc...) asparagine). A helical transmembrane segment spans residues 400-421 (ILIGCLVAIIFILLAIIVIILW). The Cytoplasmic segment spans residues 422–855 (RQFWQKMLEK…HLLLLQQGDE (434 aa)). The segment at 452–471 (SMFNNNRSSSPSEQGSNSTY) is disordered. Tyrosine 471 bears the Phosphotyrosine; by SRC and autocatalysis mark. A Protein kinase domain is found at 563-849 (LTFKEKLGEG…PSFQEIHLLL (287 aa)). ATP-binding positions include 569-577 (LGEGQFGEV) and lysine 608. The active-site Proton acceptor is aspartate 710. A phosphotyrosine; by SRC and autocatalysis mark is found at tyrosine 736, tyrosine 740, and tyrosine 741.

The protein belongs to the protein kinase superfamily. Tyr protein kinase family. Insulin receptor subfamily. As to quaternary structure, binds hydroxyproline-rich sequence motifs in fibrillar, glycosylated collagen, such as the GQOGVMGFO motif, where O stands for hydroxyproline. Interacts with SRC. Interacts (tyrosine phosphorylated) with SHC1. N-glycosylated. In terms of processing, tyrosine phosphorylated in response to collagen binding. Phosphorylated by SRC; this is required for activation and subsequent autophosphorylation on additional tyrosine residues. Detected in osteocytes, osteoblastic cells in subchondral bone, bone lining cells, tibia and cartilage (at protein level). Detected at high levels in heart and lung, and at low levels in brain, placenta, liver, skeletal muscle, pancreas, and kidney.

It localises to the cell membrane. The enzyme catalyses L-tyrosyl-[protein] + ATP = O-phospho-L-tyrosyl-[protein] + ADP + H(+). Present in an inactive state in the absence of collagen binding and phosphorylation by SRC. Tyrosine phosphorylation enhances the affinity for ATP and the catalytic activity. In terms of biological role, tyrosine kinase involved in the regulation of tissues remodeling. It functions as a cell surface receptor for fibrillar collagen and regulates cell differentiation, remodeling of the extracellular matrix, cell migration and cell proliferation. Required for normal bone development. Regulates osteoblast differentiation and chondrocyte maturation via a signaling pathway that involves MAP kinases and leads to the activation of the transcription factor RUNX2. Regulates remodeling of the extracellular matrix by up-regulation of the collagenases MMP1, MMP2 and MMP13, and thereby facilitates cell migration and tumor cell invasion. Promotes fibroblast migration and proliferation, and thereby contributes to cutaneous wound healing. This is Discoidin domain-containing receptor 2 (DDR2) from Homo sapiens (Human).